The following is a 545-amino-acid chain: Alpha-galactosidase A (545 aa).

Positions Met-1 to Gly-31 are cleaved as a signal peptide. Cys-54 and Cys-86 are disulfide-bonded. N-linked (GlcNAc...) asparagine glycans are attached at residues Asn-57, Asn-95, Asn-101, and Asn-131. A disulfide bridge links Cys-134 with Cys-164. Catalysis depends on Asp-162, which acts as the Nucleophile. N-linked (GlcNAc...) asparagine glycosylation is present at Asn-211. Residue Asp-220 is the Proton donor of the active site. 2 N-linked (GlcNAc...) asparagine glycosylation sites follow: Asn-363 and Asn-444. The region spanning Cys-421–Thr-518 is the Ricin B-type lectin domain. 2 cysteine pairs are disulfide-bonded: Cys-438/Cys-452 and Cys-477/Cys-490.

This sequence belongs to the glycosyl hydrolase 27 family. Post-translationally, a C-terminal Ser/Thr-rich region may provide possible sites for O-glycosylation.

The protein localises to the secreted. It carries out the reaction Hydrolysis of terminal, non-reducing alpha-D-galactose residues in alpha-D-galactosides, including galactose oligosaccharides, galactomannans and galactolipids.. Hydrolyzes a variety of simple alpha-D-galactoside as well as more complex molecules such as oligosaccharides and polysaccharides. The protein is Alpha-galactosidase A (aglA) of Aspergillus niger.